A 93-amino-acid polypeptide reads, in one-letter code: Small ribosomal subunit protein uS19 (93 aa).

The protein belongs to the universal ribosomal protein uS19 family.

In terms of biological role, protein S19 forms a complex with S13 that binds strongly to the 16S ribosomal RNA. This is Small ribosomal subunit protein uS19 from Salinispora tropica (strain ATCC BAA-916 / DSM 44818 / JCM 13857 / NBRC 105044 / CNB-440).